A 510-amino-acid polypeptide reads, in one-letter code: Chromosomal replication initiator protein DnaA (510 aa).

Residues 1-74 (MHTDLWERGC…EATLSELAGK (74 aa)) form a domain I, interacts with DnaA modulators region. Residues 74 to 173 (KPVRLELSLL…PTLSPAVSRG (100 aa)) form a domain II region. A disordered region spans residues 125–168 (ARHDPQSVVPTPGGSANGRAAPRVGEPGGPVGTSTLPVAPTLSP). The segment at 174–390 (RLNPALTFDT…GALRKVLAYS (217 aa)) is domain III, AAA+ region. Positions 218, 220, 221, and 222 each coordinate ATP. The domain IV, binds dsDNA stretch occupies residues 391–510 (RFSHKEISIN…LHVLEQTLKG (120 aa)).

Belongs to the DnaA family. In terms of assembly, oligomerizes as a right-handed, spiral filament on DNA at oriC.

It is found in the cytoplasm. Plays an essential role in the initiation and regulation of chromosomal replication. ATP-DnaA binds to the origin of replication (oriC) to initiate formation of the DNA replication initiation complex once per cell cycle. Binds the DnaA box (a 9 base pair repeat at the origin) and separates the double-stranded (ds)DNA. Forms a right-handed helical filament on oriC DNA; dsDNA binds to the exterior of the filament while single-stranded (ss)DNA is stabiized in the filament's interior. The ATP-DnaA-oriC complex binds and stabilizes one strand of the AT-rich DNA unwinding element (DUE), permitting loading of DNA polymerase. After initiation quickly degrades to an ADP-DnaA complex that is not apt for DNA replication. Binds acidic phospholipids. In Leptothrix cholodnii (strain ATCC 51168 / LMG 8142 / SP-6) (Leptothrix discophora (strain SP-6)), this protein is Chromosomal replication initiator protein DnaA.